A 235-amino-acid polypeptide reads, in one-letter code: Large ribosomal subunit protein uL1 (235 aa).

Belongs to the universal ribosomal protein uL1 family. Part of the 50S ribosomal subunit.

In terms of biological role, binds directly to 23S rRNA. The L1 stalk is quite mobile in the ribosome, and is involved in E site tRNA release. Protein L1 is also a translational repressor protein, it controls the translation of the L11 operon by binding to its mRNA. The chain is Large ribosomal subunit protein uL1 from Mycobacteroides abscessus (strain ATCC 19977 / DSM 44196 / CCUG 20993 / CIP 104536 / JCM 13569 / NCTC 13031 / TMC 1543 / L948) (Mycobacterium abscessus).